The primary structure comprises 155 residues: Ribosome-binding factor A (155 aa).

The protein belongs to the RbfA family. In terms of assembly, monomer. Binds 30S ribosomal subunits, but not 50S ribosomal subunits or 70S ribosomes.

The protein localises to the cytoplasm. Its function is as follows. One of several proteins that assist in the late maturation steps of the functional core of the 30S ribosomal subunit. Associates with free 30S ribosomal subunits (but not with 30S subunits that are part of 70S ribosomes or polysomes). Required for efficient processing of 16S rRNA. May interact with the 5'-terminal helix region of 16S rRNA. In Methylocella silvestris (strain DSM 15510 / CIP 108128 / LMG 27833 / NCIMB 13906 / BL2), this protein is Ribosome-binding factor A.